A 330-amino-acid chain; its full sequence is DNA-directed RNA polymerase subunit alpha (330 aa).

Positions 1–232 are alpha N-terminal domain (alpha-NTD); that stretch reads MAILAFQKPD…YHFMLFSDEK (232 aa). The tract at residues 248–330 is alpha C-terminal domain (alpha-CTD); the sequence is EEVLHMRQLL…DISKYKLDKE (83 aa).

Belongs to the RNA polymerase alpha chain family. As to quaternary structure, homodimer. The RNAP catalytic core consists of 2 alpha, 1 beta, 1 beta' and 1 omega subunit. When a sigma factor is associated with the core the holoenzyme is formed, which can initiate transcription.

It catalyses the reaction RNA(n) + a ribonucleoside 5'-triphosphate = RNA(n+1) + diphosphate. DNA-dependent RNA polymerase catalyzes the transcription of DNA into RNA using the four ribonucleoside triphosphates as substrates. The chain is DNA-directed RNA polymerase subunit alpha from Bacteroides thetaiotaomicron (strain ATCC 29148 / DSM 2079 / JCM 5827 / CCUG 10774 / NCTC 10582 / VPI-5482 / E50).